Here is a 476-residue protein sequence, read N- to C-terminus: DnaJ homolog subfamily C member 7 homolog (476 aa).

Residues 1–22 are disordered; the sequence is MTEVETTHMNAGTESQQEPAEL. Polar residues predominate over residues 7 to 18; the sequence is THMNAGTESQQE. TPR repeat units lie at residues 23 to 56, 59 to 92, 143 to 176, 177 to 210, 223 to 256, 261 to 294, and 295 to 328; these read AEKQ…GSDS, AIYY…KPDV, MSWM…NPKN, VEAL…DPDC, LENT…DPDN, AKLY…DSSY, and LKGL…DASD. The J domain maps to 349–414; it reads DHYKILGVSK…ESRRRFDSGV (66 aa).

It localises to the cytoplasm. In Schizosaccharomyces pombe (strain 972 / ATCC 24843) (Fission yeast), this protein is DnaJ homolog subfamily C member 7 homolog.